The sequence spans 1483 residues: Heme-responsive zinc finger transcription factor HAP1 (1483 aa).

The span at 1 to 50 (MSNTPYNSSVPSIASMTQSSVSRSPNMHTATTPGANTSSNSPPLHMSSDS) shows a compositional bias: polar residues. The disordered stretch occupies residues 1 to 56 (MSNTPYNSSVPSIASMTQSSVSRSPNMHTATTPGANTSSNSPPLHMSSDSSKIKRK). Positions 64, 67, 74, 81, 84, and 93 each coordinate Zn(2+). Positions 64-93 (CTICRKRKVKCDKLRPHCQQCTKTGVAHLC) form a DNA-binding region, zn(2)-C6 fungal-type. The stretch at 105-134 (EKELLKDNELKKLRERVKSLEKTLSKVHSS) forms a coiled coil. The segment at 126 to 208 (KTLSKVHSSP…ANSSSLSISN (83 aa)) is disordered. Positions 130–142 (KVHSSPSSNSLKS) are enriched in low complexity. Composition is skewed to polar residues over residues 143-152 (YNTPESSNLF) and 160-176 (TLVN…SHMH). Residues 177–208 (QQQQQQQQQEQQQDFSRSANANANSSSLSISN) are compositionally biased toward low complexity. Residues 244-444 (KGDPYLKLLW…NTIPHHQPQS (201 aa)) form a heme-responsive; required for HMC formation region. HRM repeat units lie at residues 280 to 285 (KCPINH), 299 to 304 (KCPVDH), 323 to 328 (KCPVDH), 347 to 352 (RCPVDH), 389 to 394 (KCPVDH), and 415 to 420 (RCPIDH). Composition is skewed to polar residues over residues 432–447 (STHN…SGSH) and 706–734 (QLNA…NPTL). Disordered regions lie at residues 432 to 458 (STHN…SRKH) and 706 to 767 (QLNA…KENQ). Over residues 735 to 759 (NNNMSAATTNSSSRSGSADSRSGSN) the composition is skewed to low complexity. The stretch at 1192 to 1197 (KCPVYQ) is one HRM 7 repeat. Residues 1384–1411 (TANTDTSANGSALSTLTSPQGSDLASNS) form a disordered region. Residues 1388-1411 (DTSANGSALSTLTSPQGSDLASNS) show a composition bias toward polar residues.

Binds DNA as a homodimer. Interacts with SRO9 and YDJ1. In the absence of heme, binds to at least four cellular proteins, including YDJ1 and SRO9, forming a high-molecular-weight complex (HMC) which results in repression of its activity and dictates its DNA-binding specificity.

It localises to the nucleus. Its function is as follows. Regulation of oxygen dependent gene expression. It modulates the expression of Iso-1 (CYP1) and Iso-2 (CYP3) cytochrome c. In response to heme, promotes transcription of genes encoding functions required for respiration, controlling oxidative damage and repression of anaerobic genes. Binds to the sequence 5'-CGGNNNTNNCGG-3'. Is non-functional in terms of iso-1 cytochrome c expression in strain S288c and its derivatives. The sequence is that of Heme-responsive zinc finger transcription factor HAP1 (HAP1) from Saccharomyces cerevisiae (Baker's yeast).